We begin with the raw amino-acid sequence, 95 residues long: Putative small ubiquitin-related modifier 7 (95 aa).

In terms of domain architecture, Ubiquitin-like spans serine 13–glycine 90. A Glycyl lysine isopeptide (Gly-Lys) (interchain with K-? in acceptor proteins) cross-link involves residue glycine 90.

Belongs to the ubiquitin family. SUMO subfamily. Interacts with SAE2, SCE1, SIZ1 and MMS21 Covalently attached to a number of proteins.

It localises to the nucleus. The protein localises to the cytoplasm. Its function is as follows. Ubiquitin-like protein which can be covalently attached to target lysines as a monomer. Does not seem to be involved in protein degradation and may function as an antagonist of ubiquitin in the degradation process. The polypeptide is Putative small ubiquitin-related modifier 7 (SUMO7) (Arabidopsis thaliana (Mouse-ear cress)).